The chain runs to 266 residues: Protein PAE0875 (266 aa).

Belongs to the CinA family.

The protein is Protein PAE0875 of Pyrobaculum aerophilum (strain ATCC 51768 / DSM 7523 / JCM 9630 / CIP 104966 / NBRC 100827 / IM2).